Here is a 51-residue protein sequence, read N- to C-terminus: Lantibiotic flavucin (51 aa).

The propeptide occupies 1-20 (MSDFTLDFAEGDAADTVSPQ). The lanthionine (Ser-Cys) cross-link spans 23–27 (SKSLC). 3 consecutive cross-links (beta-methyllanthionine (Thr-Cys)) follow at residues 28–31 (TPGC), 33–38 (TGWMMC), and 42–45 (TKGC).

Belongs to the type A lantibiotic family. Maturation of lantibiotics involves the enzymatic conversion of Thr, and Ser into dehydrated AA and the formation of thioether bonds with cysteine. This is followed by membrane translocation and cleavage of the modified precursor.

Its activity is regulated as follows. Antimicrobial activity depends on the dehydration degree and integrity of flavucin. Functionally, lanthionine-containing peptide antibiotic (lantibiotic) active on certain Gram-positive bacteria. The bactericidal activity of lantibiotics is based on depolarization of energized bacterial cytoplasmic membranes, initiated by the formation of aqueous transmembrane pores. Flavucin has high antimicrobial activity against several pathogenic bacteria such as S.aureus, E.faecalis, E.faecium and L.monocytogenes. Is also active against the Gram-negative P.aeruginosa. The chain is Lantibiotic flavucin from Corynebacterium lipophiloflavum (strain ATCC 700352 / DSM 44291 / CCUG 37336 / JCM 10383 / DMMZ 1944).